Reading from the N-terminus, the 107-residue chain is NADH dehydrogenase [ubiquinone] 1 beta subcomplex subunit 10-A (107 aa).

The interval 1-23 is disordered; the sequence is MGRKKGLPEFEESAPDGFDPENP.

Belongs to the complex I NDUFB10 subunit family. Complex I is composed of at least 49 different subunits.

The protein localises to the mitochondrion inner membrane. Functionally, accessory subunit of the mitochondrial membrane respiratory chain NADH dehydrogenase (Complex I), that is believed not to be involved in catalysis. Complex I functions in the transfer of electrons from NADH to the respiratory chain. The immediate electron acceptor for the enzyme is believed to be ubiquinone. This is NADH dehydrogenase [ubiquinone] 1 beta subcomplex subunit 10-A from Arabidopsis thaliana (Mouse-ear cress).